An 886-amino-acid polypeptide reads, in one-letter code: uncharacterized protein (886 aa).

Positions 1–20 are cleaved as a signal peptide; the sequence is MKILKSLVLLVLFIVMPAKA. The next 6 membrane-spanning stretches (helical) occupy residues 520-540, 563-583, 609-629, 647-667, 680-700, and 771-791; these read VIIF…IEVI, TYFF…VVGA, LLFI…IITI, IIAF…IILM, ISTL…FLLI, and FLVL…SYGL.

The protein belongs to the TrbL/VirB6 family.

The protein resides in the cell membrane. This is an uncharacterized protein from Rickettsia typhi (strain ATCC VR-144 / Wilmington).